The following is a 365-amino-acid chain: tRNA/tmRNA (uracil-C(5))-methyltransferase (365 aa).

Positions 189, 217, 222, 238, and 298 each coordinate S-adenosyl-L-methionine. Catalysis depends on Cys323, which acts as the Nucleophile. The Proton acceptor role is filled by Glu357.

The protein belongs to the class I-like SAM-binding methyltransferase superfamily. RNA M5U methyltransferase family. TrmA subfamily.

It catalyses the reaction uridine(54) in tRNA + S-adenosyl-L-methionine = 5-methyluridine(54) in tRNA + S-adenosyl-L-homocysteine + H(+). It carries out the reaction uridine(341) in tmRNA + S-adenosyl-L-methionine = 5-methyluridine(341) in tmRNA + S-adenosyl-L-homocysteine + H(+). Dual-specificity methyltransferase that catalyzes the formation of 5-methyluridine at position 54 (m5U54) in all tRNAs, and that of position 341 (m5U341) in tmRNA (transfer-mRNA). The protein is tRNA/tmRNA (uracil-C(5))-methyltransferase of Pseudoalteromonas atlantica (strain T6c / ATCC BAA-1087).